A 459-amino-acid polypeptide reads, in one-letter code: Alcohol acyl transferase 1 allele RGc (459 aa).

Active-site proton acceptor residues include His164 and Asn385.

It belongs to the plant acyltransferase family. As to expression, expressed at very low levels in the skin of ripe fruit.

Involved in the biosynthesis of volatile esters which confer ripe apple fruit flavor. Alcohol acyl transferase that can use a wide range of alcohols as substrate to produce esters. The sequence is that of Alcohol acyl transferase 1 allele RGc from Malus domestica (Apple).